A 285-amino-acid polypeptide reads, in one-letter code: Hypersensitive-induced response protein 3 (285 aa).

A lipid anchor (N-myristoyl glycine) is attached at glycine 2. Coiled coils occupy residues 113-139 (NLDD…MTAY) and 165-185 (NAAA…KIIQ).

Self-interacts and forms heteromers. Interacts with NB-LRR class of R proteins before R proteins (e.g. RPS2 or RPM1) are activated by the effectors.

It localises to the cell membrane. This chain is Hypersensitive-induced response protein 3 (HIR3), found in Arabidopsis thaliana (Mouse-ear cress).